The chain runs to 872 residues: Metabotropic glutamate receptor 2 (872 aa).

The N-terminal stretch at 1-18 is a signal peptide; that stretch reads MESLLRFLALLLLRGAVA. Topologically, residues 19 to 568 are extracellular; it reads EGPAKKVLTL…EYIRWGDAWA (550 aa). Cys50 and Cys92 are disulfide-bonded. L-glutamate is bound by residues Arg57, Arg61, Ser145, Ala166, and Thr168. 2 N-linked (GlcNAc...) asparagine glycosylation sites follow: Asn203 and Asn286. 7 cysteine pairs are disulfide-bonded: Cys234–Cys518, Cys355–Cys362, Cys400–Cys407, Cys500–Cys519, Cys504–Cys522, Cys525–Cys537, and Cys540–Cys553. Asp295 contacts L-glutamate. The N-linked (GlcNAc...) asparagine glycan is linked to Asn338. Lys377 lines the L-glutamate pocket. An N-linked (GlcNAc...) asparagine glycan is attached at Asn402. Asn547 carries an N-linked (GlcNAc...) asparagine glycan. A helical membrane pass occupies residues 569–589; the sequence is VGPVTIACLGALATLFVLGVF. The Cytoplasmic portion of the chain corresponds to 590–604; that stretch reads VRHNATPVVKASGRE. A helical membrane pass occupies residues 605–625; that stretch reads LCYILLGGVFLCYCMTFIFIA. The Extracellular portion of the chain corresponds to 626 to 633; it reads KPSTAVCT. A disulfide bridge connects residues Cys632 and Cys721. Residues 634–651 form a helical membrane-spanning segment; sequence LRRLGLGTAFSVCYSALL. The Cytoplasmic segment spans residues 652–679; that stretch reads TKTNRIARIFGGAREGAQRPRFISPASQ. Residues 677-685 are important for interaction with HTR2A; sequence ASQVAICLA. The chain crosses the membrane as a helical span at residues 680-700; it reads VAICLALISGQLLIVAAWLVV. The Extracellular segment spans residues 701–726; sequence EAPGIGKETAPERREVVTLRCNHRDA. The helical transmembrane segment at 727–747 threads the bilayer; that stretch reads SMLGSLAYNVLLIALCTLYAF. The Cytoplasmic portion of the chain corresponds to 748–760; sequence KTRKCPENFNEAK. The helical transmembrane segment at 761–781 threads the bilayer; sequence FIGFTMYTTCIIWLAFLPIFY. Residues 782 to 798 lie on the Extracellular side of the membrane; it reads VTSSDYRVQTTTMCVSV. Residues 799–819 traverse the membrane as a helical segment; sequence SLSGSVVLGCLFAPKLHIILF. The Cytoplasmic segment spans residues 820–872; the sequence is QPQKNVVSHRAPTSRFGSAAPRASANLGQGSGSQLVPTVCNGREVVDSTTSSL.

It belongs to the G-protein coupled receptor 3 family. Forms heterodimers with GRM3 or GRM4. Interacts with GNAI1. Interacts with TAMALIN. Interacts with HTR2A. Detected in neurons in brain cortex (at protein level).

The protein localises to the cell membrane. It is found in the synapse. Its subcellular location is the cell projection. It localises to the dendrite. Functionally, dimeric G protein-coupled receptor which is activated by the excitatory neurotransmitter L-glutamate. Plays critical roles in modulating synaptic transmission and neuronal excitability. Upon activation by glutamate, inhibits presynaptic calcium channels, reducing further glutamate release and dampening excitatory signaling. Mechanistically, ligand binding causes a conformation change that triggers signaling via guanine nucleotide-binding proteins (G proteins) and modulates the activity of down-stream effectors, such as adenylate cyclase. May mediate suppression of neurotransmission or may be involved in synaptogenesis or synaptic stabilization. The chain is Metabotropic glutamate receptor 2 (Grm2) from Mus musculus (Mouse).